The primary structure comprises 342 residues: MPRPVSVVFVSLIIAAAVGVWGVFAWNGGFEELDAIVNRHPSTGIPGLNHFPSLDQGLMSMAAFNLPVVGREPLFAEGRHFMAQLLANVFAIPIVLLTEDFRAAPGSVARYSTSWGVFSQLATSAVMCPLYGVCFSRRSNPRRVAVLPGRSTWIVLISVLIGYGAPAMLIFDPFSWGLKPQIWGVLAFTVYPLYVCLTASLLLKTVSSKRGRASRSVQKDSDSNSSLHYVVAGIVGVAGHLSYIGFHLGEHTGTAATRPDRVAQLVLRFLQIDYVITFAAMLTLAWHELTHSGRISLKPWRVAGYLLLGWLFIGPGATLAAAWALRERWIRQDTQEEKKRKL.

The next 5 helical transmembrane spans lie at 5–25 (VSVV…GVFA), 81–101 (FMAQ…TEDF), 115–135 (WGVF…GVCF), 151–171 (STWI…MLIF), and 182–202 (IWGV…ASLL). Asn-224 is a glycosylation site (N-linked (GlcNAc...) asparagine). The next 3 membrane-spanning stretches (helical) occupy residues 229 to 249 (YVVA…FHLG), 269 to 289 (FLQI…WHEL), and 305 to 325 (YLLL…AWAL).

The protein belongs to the membrane-bound ascI terpene cyclase family.

It is found in the membrane. It participates in antifungal biosynthesis. Its function is as follows. Cyclase; part of the gene cluster that mediates the biosynthesis of the tetrahydropyranyl antifungal agent restricticin that acts as an inhibitor of CYP51 and blocks the ergosterol biosynthesis. The highly reducing polyketide synthase resH, the short chain dehydrogenase resG, the cyclase resF, the FAD-dependent monooxygenase resA and the enoylreductase resD are required to generate the first stable intermediate desmethylrestrictinol. ResH with resD biosynthesize the first polyketide chain intermediate that is reduced by resG, followed by epoxidation by resA before 6-endo cyclization via epoxide opening by resF leads to desmethylrestrictinol. The methyltransferase resE then catalyzes the C4 O-methylation of desmethylrestrictinol to produce restrictinol, and the nonribosomal peptide synthetase resC catalyzes the C3 esterification of restrictinol with glycine that leads to restricticin. The polypeptide is Terpene cyclase resF (Aspergillus sclerotiorum).